The following is a 223-amino-acid chain: Large ribosomal subunit protein uL3 (223 aa).

It belongs to the universal ribosomal protein uL3 family. Part of the 50S ribosomal subunit. Forms a cluster with proteins L14 and L19.

One of the primary rRNA binding proteins, it binds directly near the 3'-end of the 23S rRNA, where it nucleates assembly of the 50S subunit. The protein is Large ribosomal subunit protein uL3 of Nocardioides sp. (strain ATCC BAA-499 / JS614).